Reading from the N-terminus, the 321-residue chain is Torsin-2A (321 aa).

The first 27 residues, methionine 1–alanine 27, serve as a signal peptide directing secretion. Glycine 93–serine 100 contributes to the ATP binding site. Residue asparagine 149 is glycosylated (N-linked (GlcNAc...) asparagine).

The protein belongs to the ClpA/ClpB family. Torsin subfamily. Homohexamer. Interacts with TOR1AIP1.

It is found in the endoplasmic reticulum lumen. The protein is Torsin-2A (Tor2a) of Rattus norvegicus (Rat).